A 225-amino-acid chain; its full sequence is mRNA-decapping protein D10 (225 aa).

The Nudix hydrolase domain occupies 35–218; it reads AKYPLSVIGI…NVIKYIINAV (184 aa). Positions 116 to 137 match the Nudix box motif; sequence GKIKDLESITNCLVREIKEELN. Position 122 (Glu122) interacts with Mg(2+). Residue Glu131 is the Nucleophile of the active site. Glu135 lines the Mn(2+) pocket. Asp157 serves as a coordination point for Mg(2+).

The protein belongs to the Nudix hydrolase family. The cofactor is Mg(2+). Requires Mn(2+) as cofactor.

Functionally, decapping enzyme required for the removal of the 5'-end m7GpppN cap tethered to viral and host mRNAs to allow their decay in cells. May therefore accelerate viral and cellular mRNA turnover to eliminate competing host mRNAs and allow stage-specific synthesis of viral proteins. Acceleration of the turnover of cellular transcripts may even promote the shutoff of host protein synthesis. This is mRNA-decapping protein D10 from Fowlpox virus (strain NVSL) (FPV).